The sequence spans 130 residues: Small ribosomal subunit protein uS8 (130 aa).

Lysine 88 is modified (N6-succinyllysine).

The protein belongs to the universal ribosomal protein uS8 family. In terms of assembly, component of the small ribosomal subunit. Part of the small subunit (SSU) processome, composed of more than 70 proteins and the RNA chaperone small nucleolar RNA (snoRNA) U3.

The protein resides in the cytoplasm. It localises to the nucleus. The protein localises to the nucleolus. In terms of biological role, component of the small ribosomal subunit. The ribosome is a large ribonucleoprotein complex responsible for the synthesis of proteins in the cell. Part of the small subunit (SSU) processome, first precursor of the small eukaryotic ribosomal subunit. During the assembly of the SSU processome in the nucleolus, many ribosome biogenesis factors, an RNA chaperone and ribosomal proteins associate with the nascent pre-rRNA and work in concert to generate RNA folding, modifications, rearrangements and cleavage as well as targeted degradation of pre-ribosomal RNA by the RNA exosome. Required for proper erythropoiesis. The protein is Small ribosomal subunit protein uS8 (Rps15a) of Mus musculus (Mouse).